Consider the following 636-residue polypeptide: Threonine--tRNA ligase (636 aa).

Residues 1–61 (MPVITLPDGS…TQDVSLSIIT (61 aa)) form the TGS domain. The segment at 242–533 (DHRKLGKKFD…LIEEYEGAFP (292 aa)) is catalytic. Residues Cys-333, His-384, and His-510 each contribute to the Zn(2+) site.

Belongs to the class-II aminoacyl-tRNA synthetase family. Homodimer. It depends on Zn(2+) as a cofactor.

It localises to the cytoplasm. The enzyme catalyses tRNA(Thr) + L-threonine + ATP = L-threonyl-tRNA(Thr) + AMP + diphosphate + H(+). Its function is as follows. Catalyzes the attachment of threonine to tRNA(Thr) in a two-step reaction: L-threonine is first activated by ATP to form Thr-AMP and then transferred to the acceptor end of tRNA(Thr). Also edits incorrectly charged L-seryl-tRNA(Thr). In Saccharophagus degradans (strain 2-40 / ATCC 43961 / DSM 17024), this protein is Threonine--tRNA ligase.